We begin with the raw amino-acid sequence, 274 residues long: Phosphoribosylaminoimidazole-succinocarboxamide synthase (274 aa).

Belongs to the SAICAR synthetase family.

The catalysed reaction is 5-amino-1-(5-phospho-D-ribosyl)imidazole-4-carboxylate + L-aspartate + ATP = (2S)-2-[5-amino-1-(5-phospho-beta-D-ribosyl)imidazole-4-carboxamido]succinate + ADP + phosphate + 2 H(+). It functions in the pathway purine metabolism; IMP biosynthesis via de novo pathway; 5-amino-1-(5-phospho-D-ribosyl)imidazole-4-carboxamide from 5-amino-1-(5-phospho-D-ribosyl)imidazole-4-carboxylate: step 1/2. The polypeptide is Phosphoribosylaminoimidazole-succinocarboxamide synthase (Nitrosopumilus maritimus (strain SCM1)).